Consider the following 219-residue polypeptide: 2-C-methyl-D-erythritol 4-phosphate cytidylyltransferase (219 aa).

The protein belongs to the IspD/TarI cytidylyltransferase family. IspD subfamily.

It catalyses the reaction 2-C-methyl-D-erythritol 4-phosphate + CTP + H(+) = 4-CDP-2-C-methyl-D-erythritol + diphosphate. The protein operates within isoprenoid biosynthesis; isopentenyl diphosphate biosynthesis via DXP pathway; isopentenyl diphosphate from 1-deoxy-D-xylulose 5-phosphate: step 2/6. Catalyzes the formation of 4-diphosphocytidyl-2-C-methyl-D-erythritol from CTP and 2-C-methyl-D-erythritol 4-phosphate (MEP). The sequence is that of 2-C-methyl-D-erythritol 4-phosphate cytidylyltransferase from Chlamydia trachomatis serovar L2 (strain ATCC VR-902B / DSM 19102 / 434/Bu).